Consider the following 168-residue polypeptide: Endoribonuclease YbeY (168 aa).

3 residues coordinate Zn(2+): histidine 123, histidine 127, and histidine 133.

It belongs to the endoribonuclease YbeY family. Zn(2+) is required as a cofactor.

Its subcellular location is the cytoplasm. Single strand-specific metallo-endoribonuclease involved in late-stage 70S ribosome quality control and in maturation of the 3' terminus of the 16S rRNA. This Francisella tularensis subsp. holarctica (strain LVS) protein is Endoribonuclease YbeY.